The following is a 626-amino-acid chain: Phosphoenolpyruvate carboxykinase (ATP) 2 (626 aa).

Disordered regions lie at residues Met-1 to Asn-23 and Pro-64 to Gln-86. Gly-324–Thr-331 provides a ligand contact to ATP.

It belongs to the phosphoenolpyruvate carboxykinase (ATP) family. Homohexamer.

The protein localises to the cytoplasm. It catalyses the reaction oxaloacetate + ATP = phosphoenolpyruvate + ADP + CO2. Its pathway is carbohydrate biosynthesis; gluconeogenesis. The polypeptide is Phosphoenolpyruvate carboxykinase (ATP) 2 (PCK2) (Urochloa panicoides (Panic liverseed grass)).